The primary structure comprises 377 residues: Anhydro-N-acetylmuramic acid kinase (377 aa).

Position 19–26 (19–26 (GTSLDGVD)) interacts with ATP.

This sequence belongs to the anhydro-N-acetylmuramic acid kinase family.

The catalysed reaction is 1,6-anhydro-N-acetyl-beta-muramate + ATP + H2O = N-acetyl-D-muramate 6-phosphate + ADP + H(+). It functions in the pathway amino-sugar metabolism; 1,6-anhydro-N-acetylmuramate degradation. The protein operates within cell wall biogenesis; peptidoglycan recycling. Catalyzes the specific phosphorylation of 1,6-anhydro-N-acetylmuramic acid (anhMurNAc) with the simultaneous cleavage of the 1,6-anhydro ring, generating MurNAc-6-P. Is required for the utilization of anhMurNAc either imported from the medium or derived from its own cell wall murein, and thus plays a role in cell wall recycling. This is Anhydro-N-acetylmuramic acid kinase from Roseobacter denitrificans (strain ATCC 33942 / OCh 114) (Erythrobacter sp. (strain OCh 114)).